Here is a 1215-residue protein sequence, read N- to C-terminus: Zinc finger E-box-binding homeobox 2 (1215 aa).

Positions 1-111 (MKQPIMADGP…ILQASVAGPE (111 aa)) are disordered. Residues 12 to 24 (CKRRKQANPRRKN) show a composition bias toward basic residues. A compositionally biased stretch (polar residues) spans 57 to 74 (DQDTSPASMPNHESSPHM). Basic and acidic residues predominate over residues 89–98 (RESVVEHSWH). At Ser-142 the chain carries Phosphoserine. 3 C2H2-type zinc fingers span residues 211-234 (LTCP…KYRH), 241-263 (FSCP…MVTH), and 282-304 (FKCT…LRIH). The segment at 310–334 (YECPNCKKRFSHSGSYSSHISSKKC) adopts a C2H2-type 4; atypical zinc-finger fold. Phosphoserine occurs at positions 356, 360, and 364. Lys-377 is subject to N6-acetyllysine. Lys-391 participates in a covalent cross-link: Glycyl lysine isopeptide (Lys-Gly) (interchain with G-Cter in SUMO); alternate. Lys-391 is covalently cross-linked (Glycyl lysine isopeptide (Lys-Gly) (interchain with G-Cter in SUMO2); alternate). Residues 437–487 (QHLGVGMEAPLLGFPTMNSNLSEVQKVLQIVDNTVSRQKMDCKTEDISKLK) form an SMAD-MH2 binding domain region. Residues Lys-479 and Lys-555 each participate in a glycyl lysine isopeptide (Lys-Gly) (interchain with G-Cter in SUMO2) cross-link. The segment at 581–605 (FSCQFCKESFPGPIPLHQHERYLCK) adopts a C2H2-type 5; degenerate zinc-finger fold. Residues Lys-611 and Lys-632 each participate in a glycyl lysine isopeptide (Lys-Gly) (interchain with G-Cter in SUMO2) cross-link. A DNA-binding region (homeobox; atypical) is located at residues 644-703 (GLTSPINPYKDHMSVLKAYYAMNMEPNSDELLKISIAVGLPQEFVKEWFEQRKVYQYSNS). Position 647 is a phosphoserine (Ser-647). Disordered regions lie at residues 702 to 740 (NSRS…DSIT) and 772 to 811 (VDKL…SEEL). A Glycyl lysine isopeptide (Lys-Gly) (interchain with G-Cter in SUMO2) cross-link involves residue Lys-713. Residues Ser-731 and Ser-780 each carry the phosphoserine modification. Over residues 780-808 (SNTPSPLNLSSTSSKNSHSSSYTPNSFSS) the composition is skewed to low complexity. Thr-782 is modified (phosphothreonine). Ser-784 carries the post-translational modification Phosphoserine. Residue Lys-866 forms a Glycyl lysine isopeptide (Lys-Gly) (interchain with G-Cter in SUMO); alternate linkage. A Glycyl lysine isopeptide (Lys-Gly) (interchain with G-Cter in SUMO2); alternate cross-link involves residue Lys-866. C2H2-type zinc fingers lie at residues 999 to 1021 (YACD…KYEH) and 1027 to 1049 (HQCQ…SRLH). The C2H2-type 8; atypical zinc finger occupies 1055–1076 (YQCDKCGKRFSHSGSYSQHMNH). The segment at 1117–1215 (TPQGYSDSEE…EEDNMEDGME (99 aa)) is disordered. 2 positions are modified to phosphoserine: Ser-1122 and Ser-1124. A compositionally biased stretch (basic and acidic residues) spans 1127-1149 (RESMPRDGESEKEHEKEGEEGYG). Over residues 1157–1167 (DEEEEEEEEES) the composition is skewed to acidic residues. Basic and acidic residues-rich tracts occupy residues 1168–1179 (ENKSMDTDPETI) and 1186–1205 (GDHS…KSDH). Residue Ser-1203 is modified to Phosphoserine. Acidic residues predominate over residues 1206–1215 (EEDNMEDGME).

Belongs to the delta-EF1/ZFH-1 C2H2-type zinc-finger family. As to quaternary structure, interacts with CBX4 and CTBP1. Binds activated SMAD1, activated SMAD2 and activated SMAD3; binding with SMAD4 is not detected. Sumoylation on Lys-391 and Lys-866 is promoted by the E3 SUMO-protein ligase CBX4, and impairs interaction with CTBP1 and transcription repression activity.

The protein resides in the nucleus. It localises to the chromosome. Transcriptional inhibitor that binds to DNA sequence 5'-CACCT-3' in different promoters. Represses transcription of E-cadherin. Represses expression of MEOX2. This is Zinc finger E-box-binding homeobox 2 (Zeb2) from Mus musculus (Mouse).